Here is a 713-residue protein sequence, read N- to C-terminus: Ribosomal RNA large subunit methyltransferase K/L (713 aa).

Residues 46–157 enclose the THUMP domain; it reads TAYRICLWSR…RDQATLSLDL (112 aa).

The protein belongs to the methyltransferase superfamily. RlmKL family.

The protein resides in the cytoplasm. It carries out the reaction guanosine(2445) in 23S rRNA + S-adenosyl-L-methionine = N(2)-methylguanosine(2445) in 23S rRNA + S-adenosyl-L-homocysteine + H(+). The catalysed reaction is guanosine(2069) in 23S rRNA + S-adenosyl-L-methionine = N(2)-methylguanosine(2069) in 23S rRNA + S-adenosyl-L-homocysteine + H(+). In terms of biological role, specifically methylates the guanine in position 2445 (m2G2445) and the guanine in position 2069 (m7G2069) of 23S rRNA. This chain is Ribosomal RNA large subunit methyltransferase K/L, found in Syntrophotalea carbinolica (strain DSM 2380 / NBRC 103641 / GraBd1) (Pelobacter carbinolicus).